The chain runs to 2373 residues: Highly reducing polyketide synthase (2373 aa).

In terms of domain architecture, Ketosynthase family 3 (KS3) spans 19–446 (QEPIAVVGIA…GSNAHVIVEE (428 aa)). Residues Cys-192, His-329, and His-369 each act as for beta-ketoacyl synthase activity in the active site. Residues 560 to 874 (IFTGQGAQWP…QYTSAMARGA (315 aa)) form a malonyl-CoA:ACP transacylase (MAT) domain region. Ser-652 acts as the For malonyltransferase activity in catalysis. The N-terminal hotdog fold stretch occupies residues 942–1078 (HDLLGSKVLG…GLIRIDEDVP (137 aa)). The interval 942 to 1241 (HDLLGSKVLG…LSGLRYTRID (300 aa)) is dehydratase (DH) domain. The PKS/mFAS DH domain occupies 942–1246 (HDLLGSKVLG…YTRIDTGPSV (305 aa)). His-974 (proton acceptor; for dehydratase activity) is an active-site residue. Positions 1090–1246 (SHQVDASLWH…YTRIDTGPSV (157 aa)) are C-terminal hotdog fold. Catalysis depends on Asp-1154, which acts as the Proton donor; for dehydratase activity. Residues 1669–1985 (GTTDSLIYSE…SANHIGKIVI (317 aa)) form an enoyl reductase (ER) domain region. Residues 2010-2187 (GYLLIGGLKG…NSVDLGAIQD (178 aa)) are ketoreductase (KR) domain. The Carrier domain maps to 2294–2370 (AIHDAVIDVT…QLAQKIVARL (77 aa)). Ser-2330 bears the O-(pantetheine 4'-phosphoryl)serine mark.

Requires pantetheine 4'-phosphate as cofactor.

Its pathway is mycotoxin biosynthesis. Its function is as follows. Highly reducing polyketide synthase; part of the gene cluster that mediates the biosynthesis of brefeldin A (BFA), a protein transport inhibitor that shows antiviral, antifungal, and antitumor properties. The proposed biosynthesis of BFA involves formation of an acyclic polyketide chain that is differentially tailored throughout the backbone. The highly reducing polyketide synthase Bref-PKS is proposed to synthesize the precisely reduced octaketide precursor, which could then be directly offloaded by the thiohydrolase enzyme Bref-TH followed by a cytochrome P450 monooxygenase-mediated formation of the cyclopentane ring and macrocyclization to afford 7-deoxy BFA. Alternatively, the first ring annulation can also occur on the ACP-tethered intermediate before the thiohydrolase release and lactonization. The C7-hydroxylation by another cytochrome P450 monooxygenase is believed to be the final step in the process to obtain the final structure of BFA. In addition to the HRPKS Bref-PKS and the thiohydrolase Bref-TH, the brefeldin A biosynthesis cluster contains 4 cytochrome p450 monooxygenases (called orf3 to orf6), as well a the probable cluster-specific transcription regulator orf8. The protein is Highly reducing polyketide synthase of Eupenicillium brefeldianum (Penicillium brefeldianum).